Here is a 207-residue protein sequence, read N- to C-terminus: Ribosomal RNA small subunit methyltransferase G (207 aa).

Residues G77, F82, E100–S102, and R141 contribute to the S-adenosyl-L-methionine site.

Belongs to the methyltransferase superfamily. RNA methyltransferase RsmG family.

Its subcellular location is the cytoplasm. Its function is as follows. Specifically methylates the N7 position of a guanine in 16S rRNA. This Borrelia turicatae (strain 91E135) protein is Ribosomal RNA small subunit methyltransferase G.